The chain runs to 310 residues: HPr kinase/phosphorylase (310 aa).

Catalysis depends on residues histidine 138 and lysine 159. 153 to 160 (GASGIGKS) is a binding site for ATP. Serine 160 provides a ligand contact to Mg(2+). The Proton acceptor; for phosphorylation activity. Proton donor; for dephosphorylation activity role is filled by aspartate 177. The interval 201–210 (IEIRGVGIID) is important for the catalytic mechanism of both phosphorylation and dephosphorylation. Glutamate 202 provides a ligand contact to Mg(2+). The active site involves arginine 243. Residues 264–269 (PVKTGR) are important for the catalytic mechanism of dephosphorylation.

Belongs to the HPrK/P family. In terms of assembly, homohexamer. The cofactor is Mg(2+).

The catalysed reaction is [HPr protein]-L-serine + ATP = [HPr protein]-O-phospho-L-serine + ADP + H(+). It carries out the reaction [HPr protein]-O-phospho-L-serine + phosphate + H(+) = [HPr protein]-L-serine + diphosphate. Catalyzes the ATP- as well as the pyrophosphate-dependent phosphorylation of a specific serine residue in HPr, a phosphocarrier protein of the phosphoenolpyruvate-dependent sugar phosphotransferase system (PTS). HprK/P also catalyzes the pyrophosphate-producing, inorganic phosphate-dependent dephosphorylation (phosphorolysis) of seryl-phosphorylated HPr (P-Ser-HPr). The two antagonistic activities of HprK/P are regulated by several intracellular metabolites, which change their concentration in response to the absence or presence of rapidly metabolisable carbon sources (glucose, fructose, etc.) in the growth medium. Therefore, by controlling the phosphorylation state of HPr, HPrK/P is a sensor enzyme that plays a major role in the regulation of carbon metabolism and sugar transport: it mediates carbon catabolite repression (CCR), and regulates PTS-catalyzed carbohydrate uptake and inducer exclusion. In Lactococcus lactis subsp. cremoris (strain MG1363), this protein is HPr kinase/phosphorylase.